A 97-amino-acid chain; its full sequence is RxLR effector protein PexRD21 (97 aa).

The signal sequence occupies residues 1 to 21 (MRLSYILVVVIAVTLQACVCA). The RxLR-dEER signature appears at 48–66 (RLLRGVKKRTAEREVQEER).

The protein belongs to the RxLR effector family.

It is found in the secreted. Its subcellular location is the host cell membrane. In terms of biological role, effector that is involved in host plant infection. Contributes to virulence during the early infection stage, by inhibiting plant defense responses induced by both PAMP-triggered immunity (PTI) and effector-triggered immunity (ETI). The chain is RxLR effector protein PexRD21 from Phytophthora infestans (strain T30-4) (Potato late blight agent).